We begin with the raw amino-acid sequence, 201 residues long: Dephospho-CoA kinase (201 aa).

Residues 2–201 (MIGLTGGIAS…KRWKVIPEDQ (200 aa)) enclose the DPCK domain. Residue 10 to 15 (ASGKSS) participates in ATP binding.

It belongs to the CoaE family.

It is found in the cytoplasm. The catalysed reaction is 3'-dephospho-CoA + ATP = ADP + CoA + H(+). It participates in cofactor biosynthesis; coenzyme A biosynthesis; CoA from (R)-pantothenate: step 5/5. In terms of biological role, catalyzes the phosphorylation of the 3'-hydroxyl group of dephosphocoenzyme A to form coenzyme A. This is Dephospho-CoA kinase from Halalkalibacterium halodurans (strain ATCC BAA-125 / DSM 18197 / FERM 7344 / JCM 9153 / C-125) (Bacillus halodurans).